The chain runs to 184 residues: Gremlin-1 (184 aa).

Residues 1–24 (MNRTAYTVGALLLLLGTLLPAAEG) form the signal peptide. 2 N-linked (GlcNAc...) asparagine glycosylation sites follow: Asn-2 and Asn-42. The segment at 24 to 78 (GKKKGSQGAIPPPDKAQHNDSEQTQSPPQPGSRTRGRGQGRGTAMPGEEVLESSQ) is disordered. Disulfide bonds link Cys-94–Cys-144, Cys-108–Cys-158, Cys-118–Cys-176, and Cys-122–Cys-178. The region spanning 94–184 (CKTQPLKQTI…QCRCISIDLD (91 aa)) is the CTCK domain.

This sequence belongs to the DAN family. Homodimer; can also form homooligomers. Interacts with BMP2; can form higher oligomers with BMP2. Interacts with SLIT1 and SLIT2 in a glycosylation-dependent manner. In terms of tissue distribution, highly expressed in the brain, kidney, spleen, and testis and weakly expressed in the lung and liver. Predominantly expressed in differentiated cells as neurons in brain, type I cells in lung and globlet cells in intestine.

It is found in the secreted. In terms of biological role, cytokine that may play an important role during carcinogenesis and metanephric kidney organogenesis, as a BMP antagonist required for early limb outgrowth and patterning in maintaining the FGF4-SHH feedback loop. Down-regulates the BMP4 signaling in a dose-dependent manner. Antagonist of BMP2; inhibits BMP2-mediated differentiation of osteoblasts (in vitro). Acts as inhibitor of monocyte chemotaxis. Can inhibit the growth or viability of normal cells but not transformed cells when is overexpressed. This is Gremlin-1 (Grem1) from Rattus norvegicus (Rat).